Here is an 85-residue protein sequence, read N- to C-terminus: uncharacterized protein (85 aa).

Residues 1 to 20 form the signal peptide; the sequence is MIKLFCVLAAFISINSACQS.

This is an uncharacterized protein from Invertebrate iridescent virus 6 (IIV-6).